The primary structure comprises 420 residues: Tyrosine--tRNA ligase (420 aa).

Tyrosine 36 lines the L-tyrosine pocket. The 'HIGH' region signature appears at 41-50 (PTADSLHIGH). Residues tyrosine 170 and glutamine 174 each contribute to the L-tyrosine site. The short motif at 231–235 (KFGKS) is the 'KMSKS' region element. Residue lysine 234 participates in ATP binding. In terms of domain architecture, S4 RNA-binding spans 353–420 (SNIIDVLIET…KKKYFMVNYK (68 aa)).

This sequence belongs to the class-I aminoacyl-tRNA synthetase family. TyrS type 1 subfamily. In terms of assembly, homodimer.

The protein localises to the cytoplasm. The catalysed reaction is tRNA(Tyr) + L-tyrosine + ATP = L-tyrosyl-tRNA(Tyr) + AMP + diphosphate + H(+). In terms of biological role, catalyzes the attachment of tyrosine to tRNA(Tyr) in a two-step reaction: tyrosine is first activated by ATP to form Tyr-AMP and then transferred to the acceptor end of tRNA(Tyr). The polypeptide is Tyrosine--tRNA ligase (Staphylococcus haemolyticus (strain JCSC1435)).